Reading from the N-terminus, the 21-residue chain is Hemocyanin subunit 4 (21 aa).

Belongs to the tyrosinase family. Hemocyanin subfamily. In terms of tissue distribution, hemolymph.

Its subcellular location is the secreted. The protein resides in the extracellular space. Functionally, hemocyanins are copper-containing oxygen carriers occurring freely dissolved in the hemolymph of many mollusks and arthropods. The protein is Hemocyanin subunit 4 of Maja squinado (Mediterranean spider crab).